The chain runs to 477 residues: Aspartyl/glutamyl-tRNA(Asn/Gln) amidotransferase subunit B (477 aa).

This sequence belongs to the GatB/GatE family. GatB subfamily. In terms of assembly, heterotrimer of A, B and C subunits.

The enzyme catalyses L-glutamyl-tRNA(Gln) + L-glutamine + ATP + H2O = L-glutaminyl-tRNA(Gln) + L-glutamate + ADP + phosphate + H(+). It carries out the reaction L-aspartyl-tRNA(Asn) + L-glutamine + ATP + H2O = L-asparaginyl-tRNA(Asn) + L-glutamate + ADP + phosphate + 2 H(+). Functionally, allows the formation of correctly charged Asn-tRNA(Asn) or Gln-tRNA(Gln) through the transamidation of misacylated Asp-tRNA(Asn) or Glu-tRNA(Gln) in organisms which lack either or both of asparaginyl-tRNA or glutaminyl-tRNA synthetases. The reaction takes place in the presence of glutamine and ATP through an activated phospho-Asp-tRNA(Asn) or phospho-Glu-tRNA(Gln). This Streptococcus gordonii (strain Challis / ATCC 35105 / BCRC 15272 / CH1 / DL1 / V288) protein is Aspartyl/glutamyl-tRNA(Asn/Gln) amidotransferase subunit B.